Here is a 275-residue protein sequence, read N- to C-terminus: tRNA-splicing endonuclease subunit SEN34 (275 aa).

Residues Y209, H217, and K250 contribute to the active site.

It belongs to the tRNA-intron endonuclease family. Heterotetramer composed of SEN2, SEN15, SEN34 and SEN54. Interacts directly with SEN15.

It localises to the nucleus. The protein localises to the endomembrane system. The protein resides in the mitochondrion outer membrane. It carries out the reaction pretRNA = a 3'-half-tRNA molecule with a 5'-OH end + a 5'-half-tRNA molecule with a 2',3'-cyclic phosphate end + an intron with a 2',3'-cyclic phosphate and a 5'-hydroxyl terminus.. In terms of biological role, constitutes one of the two catalytic subunit of the tRNA-splicing endonuclease complex, a complex responsible for identification and cleavage of the splice sites in pre-tRNA. It cleaves pre-tRNA at the 5'- and 3'-splice sites to release the intron. The products are an intron and two tRNA half-molecules bearing 2',3'-cyclic phosphate and 5'-OH termini. There are no conserved sequences at the splice sites, but the intron is invariably located at the same site in the gene, placing the splice sites an invariant distance from the constant structural features of the tRNA body. It probably carries the active site for 3'-splice site cleavage. The polypeptide is tRNA-splicing endonuclease subunit SEN34 (SEN34) (Saccharomyces cerevisiae (strain ATCC 204508 / S288c) (Baker's yeast)).